We begin with the raw amino-acid sequence, 333 residues long: Ketol-acid reductoisomerase (NADP(+)) (333 aa).

The region spanning 2-182 is the KARI N-terminal Rossmann domain; the sequence is AKLYYEKDCN…GGARAGVLKT (181 aa). Residues 25 to 28, Ser-51, Ser-53, and 83 to 86 each bind NADP(+); these read YGSQ and DEKQ. His-108 is a catalytic residue. Gly-134 is an NADP(+) binding site. Residues 183-328 form the KARI C-terminal knotted domain; the sequence is TFKEETETDL…KELRDMMSWS (146 aa). Positions 191, 195, 227, and 231 each coordinate Mg(2+). Residue Ser-252 coordinates substrate.

Belongs to the ketol-acid reductoisomerase family. It depends on Mg(2+) as a cofactor.

The enzyme catalyses (2R)-2,3-dihydroxy-3-methylbutanoate + NADP(+) = (2S)-2-acetolactate + NADPH + H(+). The catalysed reaction is (2R,3R)-2,3-dihydroxy-3-methylpentanoate + NADP(+) = (S)-2-ethyl-2-hydroxy-3-oxobutanoate + NADPH + H(+). The protein operates within amino-acid biosynthesis; L-isoleucine biosynthesis; L-isoleucine from 2-oxobutanoate: step 2/4. It participates in amino-acid biosynthesis; L-valine biosynthesis; L-valine from pyruvate: step 2/4. Involved in the biosynthesis of branched-chain amino acids (BCAA). Catalyzes an alkyl-migration followed by a ketol-acid reduction of (S)-2-acetolactate (S2AL) to yield (R)-2,3-dihydroxy-isovalerate. In the isomerase reaction, S2AL is rearranged via a Mg-dependent methyl migration to produce 3-hydroxy-3-methyl-2-ketobutyrate (HMKB). In the reductase reaction, this 2-ketoacid undergoes a metal-dependent reduction by NADPH to yield (R)-2,3-dihydroxy-isovalerate. The chain is Ketol-acid reductoisomerase (NADP(+)) from Alkaliphilus metalliredigens (strain QYMF).